Here is a 296-residue protein sequence, read N- to C-terminus: GTP-binding protein GEM (296 aa).

Disordered regions lie at residues methionine 1–glutamine 20 and proline 37–serine 68. Positions serine 57–serine 68 are enriched in low complexity. Residues glycine 82–serine 89 and asparagine 191–aspartate 194 each bind GTP. The calmodulin-binding stretch occupies residues alanine 266 to leucine 285.

This sequence belongs to the small GTPase superfamily. RGK family. As to quaternary structure, interacts with calmodulin in a Ca(2+)-dependent manner. Binds ROCK1. Post-translationally, phosphorylated on tyrosine residues.

It is found in the cell membrane. Its function is as follows. Could be a regulatory protein, possibly participating in receptor-mediated signal transduction at the plasma membrane. Has guanine nucleotide-binding activity but undetectable intrinsic GTPase activity. This Pongo abelii (Sumatran orangutan) protein is GTP-binding protein GEM (GEM).